We begin with the raw amino-acid sequence, 258 residues long: MLAKRIIPCLDVRDGQVVKGVQFRHHEIIGDIVPLARRYADEGADELVFYDITASADGRVVDKSWVARVAAAIDIPFCVAGGIRSVKEAGLLLSYGADKISINSPALAEPTLITRLADRFGVQCVVVGIDTWHDAASDSDRVYQFTGDEARTRATAWQTADWVQEVQRRGAGEIVLNMMNQDGVRSGYDLRQLEQIRAVCRVPLIASGGAGAPEHFLAAFSQADVDGALAASVFHKQIIQIGELKRYLALNGVEIRLC.

Active-site residues include Asp11 and Asp130.

Belongs to the HisA/HisF family. Heterodimer of HisH and HisF.

It is found in the cytoplasm. The catalysed reaction is 5-[(5-phospho-1-deoxy-D-ribulos-1-ylimino)methylamino]-1-(5-phospho-beta-D-ribosyl)imidazole-4-carboxamide + L-glutamine = D-erythro-1-(imidazol-4-yl)glycerol 3-phosphate + 5-amino-1-(5-phospho-beta-D-ribosyl)imidazole-4-carboxamide + L-glutamate + H(+). It participates in amino-acid biosynthesis; L-histidine biosynthesis; L-histidine from 5-phospho-alpha-D-ribose 1-diphosphate: step 5/9. IGPS catalyzes the conversion of PRFAR and glutamine to IGP, AICAR and glutamate. The HisF subunit catalyzes the cyclization activity that produces IGP and AICAR from PRFAR using the ammonia provided by the HisH subunit. This chain is Imidazole glycerol phosphate synthase subunit HisF, found in Edwardsiella ictaluri (strain 93-146).